The primary structure comprises 224 residues: 7-cyano-7-deazaguanine synthase (224 aa).

Position 12-22 (12-22 (MSGGMDSTLGA)) interacts with ATP. Zn(2+) contacts are provided by cysteine 191, cysteine 199, cysteine 202, and cysteine 205.

This sequence belongs to the QueC family. Zn(2+) serves as cofactor.

It carries out the reaction 7-carboxy-7-deazaguanine + NH4(+) + ATP = 7-cyano-7-deazaguanine + ADP + phosphate + H2O + H(+). The protein operates within purine metabolism; 7-cyano-7-deazaguanine biosynthesis. Its function is as follows. Catalyzes the ATP-dependent conversion of 7-carboxy-7-deazaguanine (CDG) to 7-cyano-7-deazaguanine (preQ(0)). The polypeptide is 7-cyano-7-deazaguanine synthase (Sulfurimonas denitrificans (strain ATCC 33889 / DSM 1251) (Thiomicrospira denitrificans (strain ATCC 33889 / DSM 1251))).